We begin with the raw amino-acid sequence, 580 residues long: Probable inositol transporter 3 (580 aa).

The next 12 helical transmembrane spans lie at 34–54 (GIGG…LLYI), 69–89 (EIIV…GGWY), 104–124 (VLFL…VIIL), 127–147 (LLVG…ISEM), 161–181 (GLLI…FVHT), 187–207 (WMLG…LTLP), 289–309 (FVGI…AGYA), 316–336 (ALAL…MMFV), 344–364 (LMII…AVFN), 455–475 (FGYL…PGMG), 493–513 (LAGG…SETF), and 524–544 (GTFL…WLLV).

It belongs to the major facilitator superfamily. Sugar transporter (TC 2.A.1.1) family.

It is found in the membrane. In terms of biological role, plasma membrane inositol-proton symporter. The chain is Probable inositol transporter 3 (INT3) from Arabidopsis thaliana (Mouse-ear cress).